The primary structure comprises 354 residues: Uroporphyrinogen decarboxylase (354 aa).

Substrate is bound by residues arginine 27–arginine 31, aspartate 77, tyrosine 154, serine 209, and histidine 327.

This sequence belongs to the uroporphyrinogen decarboxylase family. In terms of assembly, homodimer.

It localises to the cytoplasm. It carries out the reaction uroporphyrinogen III + 4 H(+) = coproporphyrinogen III + 4 CO2. It functions in the pathway porphyrin-containing compound metabolism; protoporphyrin-IX biosynthesis; coproporphyrinogen-III from 5-aminolevulinate: step 4/4. In terms of biological role, catalyzes the decarboxylation of four acetate groups of uroporphyrinogen-III to yield coproporphyrinogen-III. The protein is Uroporphyrinogen decarboxylase of Shewanella baltica (strain OS223).